Reading from the N-terminus, the 241-residue chain is Ribonuclease PH (241 aa).

Phosphate is bound by residues R89 and 127-129 (GTR).

It belongs to the RNase PH family. As to quaternary structure, homohexameric ring arranged as a trimer of dimers.

The enzyme catalyses tRNA(n+1) + phosphate = tRNA(n) + a ribonucleoside 5'-diphosphate. In terms of biological role, phosphorolytic 3'-5' exoribonuclease that plays an important role in tRNA 3'-end maturation. Removes nucleotide residues following the 3'-CCA terminus of tRNAs; can also add nucleotides to the ends of RNA molecules by using nucleoside diphosphates as substrates, but this may not be physiologically important. Probably plays a role in initiation of 16S rRNA degradation (leading to ribosome degradation) during starvation. This Stenotrophomonas maltophilia (strain K279a) protein is Ribonuclease PH.